The primary structure comprises 293 residues: Formamidopyrimidine-DNA glycosylase (293 aa).

Pro2 acts as the Schiff-base intermediate with DNA in catalysis. Glu3 serves as the catalytic Proton donor. The active-site Proton donor; for beta-elimination activity is Lys60. Positions 110, 129, and 174 each coordinate DNA. The segment at 259–293 adopts an FPG-type zinc-finger fold; sequence NVYRRTGKECRKCGNLIERKKISGRSTHWCPKCQK. Catalysis depends on Arg283, which acts as the Proton donor; for delta-elimination activity.

It belongs to the FPG family. As to quaternary structure, monomer. Zn(2+) is required as a cofactor.

The enzyme catalyses Hydrolysis of DNA containing ring-opened 7-methylguanine residues, releasing 2,6-diamino-4-hydroxy-5-(N-methyl)formamidopyrimidine.. It carries out the reaction 2'-deoxyribonucleotide-(2'-deoxyribose 5'-phosphate)-2'-deoxyribonucleotide-DNA = a 3'-end 2'-deoxyribonucleotide-(2,3-dehydro-2,3-deoxyribose 5'-phosphate)-DNA + a 5'-end 5'-phospho-2'-deoxyribonucleoside-DNA + H(+). In terms of biological role, involved in base excision repair of DNA damaged by oxidation or by mutagenic agents. Acts as a DNA glycosylase that recognizes and removes damaged bases. Has a preference for oxidized purines, such as 7,8-dihydro-8-oxoguanine (8-oxoG). Has AP (apurinic/apyrimidinic) lyase activity and introduces nicks in the DNA strand. Cleaves the DNA backbone by beta-delta elimination to generate a single-strand break at the site of the removed base with both 3'- and 5'-phosphates. This is Formamidopyrimidine-DNA glycosylase from Prochlorococcus marinus (strain MIT 9215).